A 292-amino-acid polypeptide reads, in one-letter code: Undecaprenyl-diphosphatase 2 (292 aa).

A run of 5 helical transmembrane segments spans residues 89–109 (WLVILGTLPIGLLGVTLQDAI), 118–138 (LIATTLIVLGLILGGADWYAS), 203–223 (FLLAMPAVLASGVFELRSIGG), 232–252 (PTILATFVAFVTGYAAIAWFL), and 263–283 (FVLYRVGLGLLLFSLLVGGAL).

Belongs to the UppP family.

It localises to the cell membrane. It carries out the reaction di-trans,octa-cis-undecaprenyl diphosphate + H2O = di-trans,octa-cis-undecaprenyl phosphate + phosphate + H(+). Functionally, catalyzes the dephosphorylation of undecaprenyl diphosphate (UPP). Confers resistance to bacitracin. The polypeptide is Undecaprenyl-diphosphatase 2 (Frankia casuarinae (strain DSM 45818 / CECT 9043 / HFP020203 / CcI3)).